The chain runs to 130 residues: Glycine cleavage system H protein (130 aa).

The Lipoyl-binding domain occupies methionine 25 to lysine 106. An N6-lipoyllysine modification is found at lysine 66.

It belongs to the GcvH family. As to quaternary structure, the glycine cleavage system is composed of four proteins: P, T, L and H. (R)-lipoate is required as a cofactor.

Functionally, the glycine cleavage system catalyzes the degradation of glycine. The H protein shuttles the methylamine group of glycine from the P protein to the T protein. This is Glycine cleavage system H protein from Leptospira interrogans serogroup Icterohaemorrhagiae serovar copenhageni (strain Fiocruz L1-130).